Here is a 440-residue protein sequence, read N- to C-terminus: tRNA(Ile)-lysidine synthase (440 aa).

19–24 (SGGLDS) contributes to the ATP binding site.

This sequence belongs to the tRNA(Ile)-lysidine synthase family.

It is found in the cytoplasm. The catalysed reaction is cytidine(34) in tRNA(Ile2) + L-lysine + ATP = lysidine(34) in tRNA(Ile2) + AMP + diphosphate + H(+). Ligates lysine onto the cytidine present at position 34 of the AUA codon-specific tRNA(Ile) that contains the anticodon CAU, in an ATP-dependent manner. Cytidine is converted to lysidine, thus changing the amino acid specificity of the tRNA from methionine to isoleucine. This is tRNA(Ile)-lysidine synthase from Buchnera aphidicola subsp. Acyrthosiphon pisum (strain APS) (Acyrthosiphon pisum symbiotic bacterium).